Here is a 623-residue protein sequence, read N- to C-terminus: ATP-dependent lipid A-core flippase (623 aa).

5 helical membrane-spanning segments follow: residues 66–86 (LVLA…LAVI), 103–123 (VWFL…CNFF), 190–210 (LVVI…TLII), 290–310 (LTPL…AVAL), and 317–337 (ALTV…FDPI). In terms of domain architecture, ABC transmembrane type-1 spans 67 to 349 (VLAVLLMAGA…LTNLAGKMQK (283 aa)). Residues 382–618 (VEFRAVSHRF…NGLYASLYNM (237 aa)) form the ABC transporter domain. Residue 416–423 (GRSGSGKT) coordinates ATP.

This sequence belongs to the ABC transporter superfamily. Lipid exporter (TC 3.A.1.106) family. In terms of assembly, homodimer.

The protein resides in the cell inner membrane. It catalyses the reaction ATP + H2O + lipid A-core oligosaccharideSide 1 = ADP + phosphate + lipid A-core oligosaccharideSide 2.. Its function is as follows. Involved in lipopolysaccharide (LPS) biosynthesis. Translocates lipid A-core from the inner to the outer leaflet of the inner membrane. Transmembrane domains (TMD) form a pore in the inner membrane and the ATP-binding domain (NBD) is responsible for energy generation. The sequence is that of ATP-dependent lipid A-core flippase from Bordetella pertussis (strain Tohama I / ATCC BAA-589 / NCTC 13251).